The sequence spans 262 residues: Tritrans,polycis-undecaprenyl-diphosphate synthase (GGDP specific) (262 aa).

Residue Asp-40 is part of the active site. Asp-40 serves as a coordination point for Mg(2+). Substrate contacts are provided by residues 41–44 (GNRR), Trp-45, and 85–87 (SAE). Asn-88 (proton acceptor) is an active-site residue. Residues Arg-92, Arg-211, and 217 to 219 (RIS) contribute to the substrate site. Glu-230 contributes to the Mg(2+) binding site.

Belongs to the UPP synthase family. Homodimer. It depends on Mg(2+) as a cofactor.

It carries out the reaction geranylgeranyl diphosphate + 7 isopentenyl diphosphate = tri-trans,hepta-cis-undecaprenyl diphosphate + 7 diphosphate. Its function is as follows. Generates tritrans,heptacis-undecaprenyl diphosphate from isopentenyl pyrophosphate (IPP) and geranylgeranyl diphosphate. It is probably the precursor of glycosyl carrier lipids. This chain is Tritrans,polycis-undecaprenyl-diphosphate synthase (GGDP specific) (uppS), found in Sulfolobus acidocaldarius (strain ATCC 33909 / DSM 639 / JCM 8929 / NBRC 15157 / NCIMB 11770).